A 147-amino-acid chain; its full sequence is Large ribosomal subunit protein uL15 (147 aa).

A disordered region spans residues 1 to 42 (MTIKVHHLRPAPGAKTAKTRVGRGEGSKGKTAGRGTKGSKAR).

This sequence belongs to the universal ribosomal protein uL15 family. Part of the 50S ribosomal subunit.

Functionally, binds to the 23S rRNA. This chain is Large ribosomal subunit protein uL15, found in Salinispora arenicola (strain CNS-205).